Here is a 248-residue protein sequence, read N- to C-terminus: MALLEICCYSMECALTAQQNGADRIELCAAPKEGGLTPSLGVLRTVRQHVAIAVHPIIRPRGGDFCYTDGEFAAMLEDVRTVRELGFPGLVTGVLDVDGNVDLARMEKIMAAAGPLAVTFHRAFDMCANPFNALKNLADLGVARVLTSGQKSDAVHGLPIIMELIAQGDAPIIMAGAGVRSENLQRFLDAGVQEVHSSAGAWQASPMRYRNHGLSMSTDAQADEYSRYAVDGAAVAEMKGVIVRHQAN.

The protein belongs to the CutC family.

Its subcellular location is the cytoplasm. This is PF03932 family protein CutC from Citrobacter koseri (strain ATCC BAA-895 / CDC 4225-83 / SGSC4696).